The following is a 144-amino-acid chain: Maximins 3/H16 (144 aa).

Positions 1-18 (MNFKYIVAVSFLIASAYA) are cleaved as a signal peptide. Propeptides lie at residues 19 to 43 (RSVQNDEQSLSQRDVLEEESLREIR) and 73 to 122 (RTAE…KKEK). Residue I143 is modified to Isoleucine amide.

This sequence belongs to the bombinin family. Expressed by the skin glands.

Its subcellular location is the secreted. Its function is as follows. Maximin-3 shows antibacterial activity against both Gram-positive and Gram-negative bacteria. It also shows antimicrobial activity against the fungus C.albicans, but not against A.flavus nor P.uticale. It has little hemolytic activity. It possess a significant cytotoxicity against tumor cell lines. It possess a significant anti-HIV activity. It shows high spermicidal activity. Maximin-H16 shows antimicrobial activity against bacteria and against the fungus C.albicans. Shows strong hemolytic activity. This is Maximins 3/H16 from Bombina maxima (Giant fire-bellied toad).